The primary structure comprises 293 residues: Zinc metalloproteinase nas-2 (293 aa).

The N-terminal stretch at 1–17 (MIFPLLLTLILPNFVAP) is a signal peptide. A propeptide spanning residues 18-67 (KVLEPEKDDEIAVSTQREKTFFDMKLILTKLPTFEPSKYGHINIPLRKKR) is cleaved from the precursor. Residues 67-260 (RGIALHPLQW…ININTFYKCK (194 aa)) form the Peptidase M12A domain. An N-linked (GlcNAc...) asparagine glycan is attached at Asn111. 2 disulfides stabilise this stretch: Cys114–Cys259 and Cys139–Cys169. His180 provides a ligand contact to Zn(2+). Residue Glu181 is part of the active site. 2 residues coordinate Zn(2+): His184 and His190. An N-linked (GlcNAc...) asparagine glycan is attached at Asn287.

Zn(2+) is required as a cofactor.

The protein localises to the secreted. Functionally, metalloprotease. This is Zinc metalloproteinase nas-2 (nas-2) from Caenorhabditis elegans.